The primary structure comprises 407 residues: Glucose-1-phosphate adenylyltransferase 2 (407 aa).

Alpha-D-glucose 1-phosphate-binding positions include Y97, G162, 177 to 178 (EK), and S195.

The protein belongs to the bacterial/plant glucose-1-phosphate adenylyltransferase family. Homotetramer.

It catalyses the reaction alpha-D-glucose 1-phosphate + ATP + H(+) = ADP-alpha-D-glucose + diphosphate. It functions in the pathway glycan biosynthesis; glycogen biosynthesis. Functionally, involved in the biosynthesis of ADP-glucose, a building block required for the elongation reactions to produce glycogen. Catalyzes the reaction between ATP and alpha-D-glucose 1-phosphate (G1P) to produce pyrophosphate and ADP-Glc. This is Glucose-1-phosphate adenylyltransferase 2 from Vibrio cholerae serotype O1 (strain ATCC 39315 / El Tor Inaba N16961).